The chain runs to 224 residues: MNTQFKLIGFDLDGTLVNSLPDLALSVNSALAEFNLPQAPEELVLTWIGNGAPVLIARALDWAKKQTGKVLTETEVKQVTERFNFYYGENLCNVSRLYPNVKETLEILKEKGYVLAVVTNKPTRHVQPVLAAFGIDHLFSEMLGGQSLPAIKPHPAPLYYLCGKFGFEPRQVLFVGDSKNDIIAGHAAGCAVVGLTYGYNYNIPIRESNPDWVFDDFAQLLSIL.

Residue D11 is the Nucleophile of the active site. Mg(2+) is bound by residues D11, D13, and D177.

The protein belongs to the HAD-like hydrolase superfamily. CbbY/CbbZ/Gph/YieH family. It depends on Mg(2+) as a cofactor.

The enzyme catalyses 2-phosphoglycolate + H2O = glycolate + phosphate. It participates in organic acid metabolism; glycolate biosynthesis; glycolate from 2-phosphoglycolate: step 1/1. Specifically catalyzes the dephosphorylation of 2-phosphoglycolate. Is involved in the dissimilation of the intracellular 2-phosphoglycolate formed during the DNA repair of 3'-phosphoglycolate ends, a major class of DNA lesions induced by oxidative stress. The polypeptide is Phosphoglycolate phosphatase (Haemophilus influenzae (strain ATCC 51907 / DSM 11121 / KW20 / Rd)).